The chain runs to 830 residues: Receptor-like protein kinase HERK 1 (830 aa).

The N-terminal stretch at 1-24 (MGIEKFETFILISTISILLCICHG) is a signal peptide. Residues 25–405 (FTPVDNYLIN…SSSSSKSNLG (381 aa)) are Extracellular-facing. N-linked (GlcNAc...) asparagine glycans are attached at residues Asn40, Asn146, Asn217, Asn280, and Asn381. The chain crosses the membrane as a helical span at residues 406–426 (LIVGSAIGSLLAVVFLGSCFV). The Cytoplasmic segment spans residues 427-830 (LYKKRKRGQD…FSQLVKSEGR (404 aa)). Residues 485–758 (FDESRNIGVG…GDVLWNLEYA (274 aa)) enclose the Protein kinase domain. ATP-binding positions include 491–499 (IGVGGFGKV) and Lys513. Asp609 (proton acceptor) is an active-site residue.

The protein belongs to the protein kinase superfamily. Ser/Thr protein kinase family. Autophosphorylated. Expressed in most vegetative tissues, including leaves, stems and roots, especially in cell elongation regions.

The protein resides in the cell membrane. Functionally, receptor-like protein kinase required for cell elongation during vegetative growth, mostly in a brassinosteroid-(BR-) independent manner. This is Receptor-like protein kinase HERK 1 (HERK1) from Arabidopsis thaliana (Mouse-ear cress).